A 417-amino-acid chain; its full sequence is Tyrosine--tRNA ligase (417 aa).

Y39 is an L-tyrosine binding site. The 'HIGH' region signature appears at 44–53; the sequence is PTASSLHAGS. 2 residues coordinate L-tyrosine: Y176 and Q180. The short motif at 236 to 240 is the 'KMSKS' region element; the sequence is KMGKS. Residue K239 participates in ATP binding. The S4 RNA-binding domain occupies 350-417; it reads AGLLALLVQA…KKKHVLIKPL (68 aa).

Belongs to the class-I aminoacyl-tRNA synthetase family. TyrS type 1 subfamily. In terms of assembly, homodimer.

The protein resides in the cytoplasm. It catalyses the reaction tRNA(Tyr) + L-tyrosine + ATP = L-tyrosyl-tRNA(Tyr) + AMP + diphosphate + H(+). Its function is as follows. Catalyzes the attachment of tyrosine to tRNA(Tyr) in a two-step reaction: tyrosine is first activated by ATP to form Tyr-AMP and then transferred to the acceptor end of tRNA(Tyr). The chain is Tyrosine--tRNA ligase from Bartonella quintana (strain Toulouse) (Rochalimaea quintana).